The following is a 329-amino-acid chain: Putative ubiquitin thioesterase otu1 (329 aa).

Residues 7-89 (RLKYENQSAV…ATSFSTNEPA (83 aa)) form a UBX-like region. Residues 85 to 127 (TNEPAKPPIPNAATKPTFPPQTEISNPPAVSHQSKNTSQDPPY) are disordered. Over residues 115–124 (SHQSKNTSQD) the composition is skewed to polar residues. The 120-residue stretch at 135–254 (IALRVMPDDN…GIHYDLAALA (120 aa)) folds into the OTU domain. The segment at 140 to 146 (MPDDNSC) is cys-loop. The active site involves D143. The Nucleophile role is filled by C146. A variable-loop region spans residues 193 to 203 (IRKETSWGGYI). Positions 243–247 (YSGIH) are his-loop. I246 is a substrate binding site. H247 is an active-site residue. The interval 272–277 (VTITPY) is S2 site. The segment at 299–323 (IRCTICGTGLVGEKDATAHALATGH) adopts a C2H2-type zinc-finger fold. H323 is an active-site residue.

It is found in the cytoplasm. The protein resides in the nucleus. It carries out the reaction Thiol-dependent hydrolysis of ester, thioester, amide, peptide and isopeptide bonds formed by the C-terminal Gly of ubiquitin (a 76-residue protein attached to proteins as an intracellular targeting signal).. Functionally, hydrolase that can remove conjugated ubiquitin from proteins and may therefore play an important regulatory role at the level of protein turnover by preventing degradation. Has a role in meiosis. The sequence is that of Putative ubiquitin thioesterase otu1 (otu1) from Schizosaccharomyces pombe (strain 972 / ATCC 24843) (Fission yeast).